Reading from the N-terminus, the 716-residue chain is Leucine-rich repeat neuronal protein 1 (716 aa).

Residues 1–25 (MARLSTGKAACQVVLGLLITSLTES) form the signal peptide. The region spanning 26 to 72 (SILTSECPQLCVCEIRPWFTPQSTYREATTVDCNDLRLTRIPGNLSS) is the LRRNT domain. Residues 26–631 (SILTSECPQL…DISDHETSTA (606 aa)) lie on the Extracellular side of the membrane. Asparagine 69 carries an N-linked (GlcNAc...) asparagine glycan. 9 LRR repeats span residues 73-95 (DTQV…QQLF), 96-117 (NLTE…GLAN), 120-141 (QLTT…CLQD), 144-165 (NLQE…AFSG), 168-189 (NLLR…WFDS), 192-213 (NLEI…NFRP), 216-237 (NLRS…ALVG), 240-261 (SLES…ALQK), and 264-285 (NLKF…DFKN). N-linked (GlcNAc...) asparagine glycans are attached at residues asparagine 96 and asparagine 117. The 54-residue stretch at 371-424 (NPLRCDCVIHWINSNKTNIRFMEPLSMFCAMPPEYRGQQVKEVLIQDSSEQCLP) folds into the LRRCT domain. Residue asparagine 385 is glycosylated (N-linked (GlcNAc...) asparagine). Positions 424 to 515 (PMISHDTFPN…GADTRVATIK (92 aa)) constitute an Ig-like C2-type domain. A disulfide bridge links cysteine 447 with cysteine 499. Residue asparagine 517 is glycosylated (N-linked (GlcNAc...) asparagine). Residues 525 to 619 (QVLKIYVKQT…VNVTTKTAAF (95 aa)) enclose the Fibronectin type-III domain. Residues 632–652 (LAAVMGSMFAVISLASIAIYI) traverse the membrane as a helical segment. The Cytoplasmic segment spans residues 653-716 (AKRFKRKNYH…VDTSRSYYMW (64 aa)). The segment at 692-716 (SDKDKDGSADTKPTQVDTSRSYYMW) is disordered. Polar residues predominate over residues 702–716 (TKPTQVDTSRSYYMW).

Expressed in brain.

Its subcellular location is the membrane. The sequence is that of Leucine-rich repeat neuronal protein 1 (Lrrn1) from Mus musculus (Mouse).